A 505-amino-acid chain; its full sequence is MLFLNAKFIDLDLGESAVIVNEEDLKGTSYYPQDRVLIESHAGSVIGNIYSTKTMVQKGEVGMLVSELSEISISEGEEVKLRHAEKPESIPFIKKKMDGQVLNPHEIRTIIDEIVSKKLSNIELSAFVSSTYINGMNMDEISEMTKRIAETGDMISWEKSLVVDIHSIGGVPGNKYALLSIPILAAAGITVPKTSSRAITSPAGTADVMEVLTNVELKEEEIKRIVKTTNGCLAWGGGVNLAPADDIIINVERPVSIDPQPQLLASVMAKKIATGIKYTVIDIPVGKGVKIKNEAEGAKLARKFIELGEMLNIKVECVLTYGGQPLGRAIGPALEAKEAIESLQDPKNAPKSLIEKSLSLAGILLELGGAAQIGEGQNLAWEILESGKALEKFNQIIVEQGGTPKKPEEIELGEYVEEILAPIDGYITDISNTAITNVVKEAGAPRDKKAGILLNSKIGNKVTQGDVLYTIYSGSEERLISAVNLARRVYPVKVEGMLIERISKF.

AMP contacts are provided by residues Gly-170, 196–201 (SRAITS), and Thr-205. The active-site Proton donor is the Asp-258. The AMP site is built by Ser-266 and Lys-290.

This sequence belongs to the thymidine/pyrimidine-nucleoside phosphorylase family. Type 2 subfamily.

It catalyses the reaction AMP + phosphate = alpha-D-ribose 1,5-bisphosphate + adenine. The catalysed reaction is CMP + phosphate = cytosine + alpha-D-ribose 1,5-bisphosphate. It carries out the reaction UMP + phosphate = alpha-D-ribose 1,5-bisphosphate + uracil. In terms of biological role, catalyzes the conversion of AMP and phosphate to adenine and ribose 1,5-bisphosphate (R15P). Exhibits phosphorylase activity toward CMP and UMP in addition to AMP. Functions in an archaeal AMP degradation pathway, together with R15P isomerase and RubisCO. The protein is AMP phosphorylase of Methanococcus maripaludis (strain C7 / ATCC BAA-1331).